Consider the following 227-residue polypeptide: Transcription antitermination protein NusB (227 aa).

Disordered regions lie at residues 165-189 (ASES…SDED) and 201-227 (AEET…ADES). 2 stretches are compositionally biased toward acidic residues: residues 178 to 189 (DDSDALDDSDED) and 201 to 214 (AEET…AEDS). Positions 215 to 227 (EVSKVSEEKADES) are enriched in basic and acidic residues.

This sequence belongs to the NusB family.

Its function is as follows. Involved in transcription antitermination. Required for transcription of ribosomal RNA (rRNA) genes. Binds specifically to the boxA antiterminator sequence of the ribosomal RNA (rrn) operons. This is Transcription antitermination protein NusB from Corynebacterium glutamicum (strain ATCC 13032 / DSM 20300 / JCM 1318 / BCRC 11384 / CCUG 27702 / LMG 3730 / NBRC 12168 / NCIMB 10025 / NRRL B-2784 / 534).